The primary structure comprises 22 residues: Polydim-I (22 aa).

Expressed by the venom gland.

It localises to the secreted. In terms of biological role, antibacterial peptide. Acts on the Mycobacterium abscessus subsp. massiliense cell wall. Reduces 40-50% of the bacterial load in macrophages infected with different M.abscessus strains. Is not cytotoxic towards mammalian cells, and shows no hemolytic activity against human erythrocytes. In vivo, reduces the bacterial load in the lungs, spleen, and liver of highly susceptible mice intravenously infected with M.abscessus. In Polybia dimorpha (Neotropical wasp), this protein is Polydim-I.